Reading from the N-terminus, the 279-residue chain is MALKTFNPVTPSLRQLVIVDRSDLYKGKPLKQLTEGKSSSGGRNNNGRITVRFRGGGHKQTYRIIDFKRRKLDVAAKVERIEYDPNRTSFIALIRYADGEQSYIIAPQRLSVGDEVVSSQQADVKPGNAMPLASMPVGTIVHNIEMKIGKGGAMVRSAGTFAQVVGRDQGYVIIRLNSGEQRLIHGQCFATVGAVSNPDHMNASIGKAGRSRWLGRRPHNRGVTMNPVDHPHGGGEGRTSGGRHPVTPWGKPTKGKKTRSNKSTTKFIVTSRHKSKKKG.

Residues 202 to 279 form a disordered region; the sequence is NASIGKAGRS…TSRHKSKKKG (78 aa). The segment covering 209–220 has biased composition (basic residues); sequence GRSRWLGRRPHN.

Belongs to the universal ribosomal protein uL2 family. Part of the 50S ribosomal subunit. Forms a bridge to the 30S subunit in the 70S ribosome.

In terms of biological role, one of the primary rRNA binding proteins. Required for association of the 30S and 50S subunits to form the 70S ribosome, for tRNA binding and peptide bond formation. It has been suggested to have peptidyltransferase activity; this is somewhat controversial. Makes several contacts with the 16S rRNA in the 70S ribosome. The polypeptide is Large ribosomal subunit protein uL2 (Methylocella silvestris (strain DSM 15510 / CIP 108128 / LMG 27833 / NCIMB 13906 / BL2)).